The sequence spans 403 residues: Phosphopentomutase (403 aa).

6 residues coordinate Mn(2+): D13, D298, H303, D339, H340, and H351.

The protein belongs to the phosphopentomutase family. Mn(2+) serves as cofactor.

It localises to the cytoplasm. It catalyses the reaction 2-deoxy-alpha-D-ribose 1-phosphate = 2-deoxy-D-ribose 5-phosphate. The enzyme catalyses alpha-D-ribose 1-phosphate = D-ribose 5-phosphate. The protein operates within carbohydrate degradation; 2-deoxy-D-ribose 1-phosphate degradation; D-glyceraldehyde 3-phosphate and acetaldehyde from 2-deoxy-alpha-D-ribose 1-phosphate: step 1/2. In terms of biological role, isomerase that catalyzes the conversion of deoxy-ribose 1-phosphate (dRib-1-P) and ribose 1-phosphate (Rib-1-P) to deoxy-ribose 5-phosphate (dRib-5-P) and ribose 5-phosphate (Rib-5-P), respectively. This is Phosphopentomutase from Streptococcus pneumoniae serotype 19F (strain G54).